A 1005-amino-acid chain; its full sequence is Helicase-like transcription factor (1005 aa).

At Arg27 the chain carries Omega-N-methylarginine. Residues 38–287 mediate DNA binding; the sequence is EFQDIIPPDD…FSEKDQPENV (250 aa). Lys112 participates in a covalent cross-link: Glycyl lysine isopeptide (Lys-Gly) (interchain with G-Cter in SUMO2). Tyr195 carries the phosphotyrosine; by JAK2 modification. Lys211 is covalently cross-linked (Glycyl lysine isopeptide (Lys-Gly) (interchain with G-Cter in SUMO2)). 294–301 is a binding site for ATP; sequence DDMGLGKT. The segment covering 325-361 has biased composition (basic and acidic residues); that stretch reads KNQVKKECNSSESDKPGRKDTIKKTDGLSKEGSRYSE. A disordered region spans residues 325–385; that stretch reads KNQVKKECNS…SELSSSQPKR (61 aa). The segment covering 373–382 has biased composition (polar residues); the sequence is YSMSELSSSQ. A phosphoserine mark is found at Ser395, Ser396, and Ser398. The Helicase ATP-binding domain maps to 427–603; the sequence is GPSKIKEDTA…WSLLSFLKLK (177 aa). The short motif at 554–557 is the DEGH box element; that stretch reads DEGH. Position 733 is a phosphothreonine (Thr733). The RING-type zinc finger occupies 757–798; it reads CAICLDSLTVPVITHCAHVFCKPCICQCIQNEQPHAKCPLCR. Required for interaction with the RFBP isoform of ATP11B stretches follow at residues 767-772 and 791-796; these read PVITHC and HAKCPL. Residues 834 to 999 enclose the Helicase C-terminal domain; sequence ALMHALIDLR…EMKQAKINEI (166 aa). Residues 922–1005 form an interaction with SP1 and SP3 region; the sequence is SRVFLMDPAW…INEIRTLIDL (84 aa).

The protein belongs to the SNF2/RAD54 helicase family. RAD16 subfamily. As to quaternary structure, interacts with SP1 and SP3 independently of DNA; the interaction with these transcriptional factors may be required for basal transcription of target genes. Interacts (via the RING-finger) with isoform RFBP of ATP11B. Progesterone-dependent isoform 1 interacts with EGR1; the interaction requires prior binding to DNA and represses c-Rel via a DNA looping mechanism. Interacts with GATA4. Interacts with PCNA; the interaction promotes polyubiquitination of PCNA through association with the UBE2B-RAD18 and UBE2V2-UBE2N ubiquitin ligase complexes. Interacts with RAD18, SHPRH, UBE2V2 and UBE2N. In terms of processing, phosphorylated on serine, threonine, and tyrosine residues. Tyr-195 phosphorylation is catalyzed by JAK2 in response to prolactin treatment. It is required for DNA binding. As to expression, isoform 1 is expressed preferentially in bladder, cervix, diaphragm, duodenum, epididymis, heart, kidney, liver, lung, ovary (granulosa cells), prostate, spleen, testis (predominantly in the Sertoli cells of the seminiferous tubules) and vagina. Isoform 2 is expressed preferentially in lactating mammary gland and uterine endometrium.

The protein resides in the cytoplasm. Its subcellular location is the nucleus. It is found in the nucleolus. The protein localises to the nucleoplasm. The enzyme catalyses S-ubiquitinyl-[E2 ubiquitin-conjugating enzyme]-L-cysteine + [acceptor protein]-L-lysine = [E2 ubiquitin-conjugating enzyme]-L-cysteine + N(6)-ubiquitinyl-[acceptor protein]-L-lysine.. The protein operates within protein modification; protein ubiquitination. In terms of biological role, has both helicase and E3 ubiquitin ligase activities. Possesses intrinsic ATP-dependent nucleosome-remodeling activity. This activity may be required for transcriptional activation or repression of specific target promoters. These may include the SERPINE1, to which this protein can bind directly. Mediates repression by c-Rel through a DNA-looping mechanism. Plays a role in error-free postreplication repair (PRR) of damaged DNA and maintains genomic stability through acting as a ubiquitin ligase for 'Lys-63'-linked polyubiquitination of chromatin-bound PCNA. Transcriptional regulator that mediates the ability of prolactin to augment progesterone-dependent transcription of the SCGB1A1/uteroglobin gene through a bipartite progesterone receptor half-site/overlapping Y-box combination (-38/-26) where progesterone activation is attenuated by nuclear factor Y binding. Regulation also involves two GC-rich sequences in the proximal promoter (positions -162/+90) and a RUSH/SMARCA3 site (positions -616/-611) in the 5'-untranslated region. The sequence is that of Helicase-like transcription factor (HLTF) from Oryctolagus cuniculus (Rabbit).